Reading from the N-terminus, the 271-residue chain is Aquaporin-11 (271 aa).

The Cytoplasmic segment spans residues 1–14 (MSALLGLRPEVQDT). Residues 15–35 (CISLGLMLLFVLFVGLARVIA) traverse the membrane as a helical segment. Residues 36–41 (RQQLHR) are Lumenal-facing. Residues 42–62 (PVVHAFVLEFLATFQLCCCTH) form a helical membrane-spanning segment. Over 63-76 (ELQVLSEQDSAHPT) the chain is Cytoplasmic. A helical transmembrane segment spans residues 77–97 (WTLTLIYFFSLVHGLTLVGTA). Residues 98 to 166 (SNPCGVMMQM…NPIHTDMSKA (69 aa)) lie on the Lumenal side of the membrane. The NPC motif lies at 99–101 (NPC). The chain crosses the membrane as a helical span at residues 167-187 (IIIEAICSFIFHSALLHFQEV). At 188–194 (RTKLRIH) the chain is on the cytoplasmic side. Residues 195–215 (LLAALITFLAYAGGSLTGALF) form a helical membrane-spanning segment. The NPA motif lies at 216 to 218 (NPA). At 216–234 (NPALALSLHFPCFDELFYK) the chain is on the lumenal side. A helical membrane pass occupies residues 235–255 (FFVVYWLAPSVGVLMMILMFS). At 256-271 (FFLPWLHNNQMTNKKE) the chain is on the cytoplasmic side.

This sequence belongs to the MIP/aquaporin (TC 1.A.8) family. AQP11/AQP12 subfamily. In terms of assembly, homodimer; disulfide-linked. Homotetramer. Can also form homomultimer. In terms of processing, not glycosylated. As to expression, highly expressed in the S1 proximal tubule segment,. Expressed in the testis, kidney, and liver. Weakly expressed in the heart, brain, and muscle. Highly expressed in the testis. Expressed in the proximal tubule of the cortex of 8-day-old mouse kidney. Expressed in retina specifically at retinal Mueller glial cells. Expressed in brain. Expressed abundantly at the choroid plexus but also expressed weakly in the parenchyma. Expressed at the capillary endothelium in the cerebral white matter. Expressed in adult testis, in the elongated spermatids (ES) and in residual bodies inside Sertoli cells.

Its subcellular location is the endoplasmic reticulum membrane. It is found in the cytoplasmic vesicle membrane. The protein resides in the cell membrane. It carries out the reaction H2O(in) = H2O(out). The catalysed reaction is glycerol(in) = glycerol(out). The enzyme catalyses H2O2(out) = H2O2(in). Functionally, channel protein that facilitates the transport of water, glycerol and hydrogen peroxide across membrane of cell or organelles guaranteeing intracellular homeostasis in several organes like liver, kidney and brain. In situation of stress, participates in endoplasmic reticulum (ER) homeostasis by regulating redox homeostasis through the transport of hydrogen peroxide across the endoplasmic reticulum membrane thereby regulating the oxidative stress through the NADPH oxidase 2 pathway. Plays a role by maintaining an environment suitable for translation or protein foldings in the ER lumen namely by participating in the PKD1 glycosylation processing resulting in regulation of PKD1 membrane trafficking thereby preventing the accumulation of unfolding protein in ER. Plays a role in the proximal tubule function by regulating its endosomal acidification. May play a role in postnatal kidney development. This chain is Aquaporin-11, found in Mus musculus (Mouse).